The primary structure comprises 368 residues: tRNA-specific 2-thiouridylase MnmA (368 aa).

ATP-binding positions include 11-18 (GMSGGVDS) and Met37. The tract at residues 97 to 99 (NPD) is interaction with target base in tRNA. The active-site Nucleophile is the Cys102. Cysteines 102 and 199 form a disulfide. Gly127 lines the ATP pocket. Residues 149–151 (KDQ) form an interaction with tRNA region. Residue Cys199 is the Cysteine persulfide intermediate of the active site. An interaction with tRNA region spans residues 311-312 (RY).

Belongs to the MnmA/TRMU family. In terms of assembly, interacts with TusE.

It localises to the cytoplasm. The enzyme catalyses S-sulfanyl-L-cysteinyl-[protein] + uridine(34) in tRNA + AH2 + ATP = 2-thiouridine(34) in tRNA + L-cysteinyl-[protein] + A + AMP + diphosphate + H(+). In terms of biological role, catalyzes the 2-thiolation of uridine at the wobble position (U34) of tRNA(Lys), tRNA(Glu) and tRNA(Gln), leading to the formation of s(2)U34, the first step of tRNA-mnm(5)s(2)U34 synthesis. Sulfur is provided by IscS, via a sulfur-relay system. Binds ATP and its substrate tRNAs. The protein is tRNA-specific 2-thiouridylase MnmA of Salmonella typhimurium (strain LT2 / SGSC1412 / ATCC 700720).